The chain runs to 371 residues: Dual-specificity RNA methyltransferase RlmN (371 aa).

Glu97 serves as the catalytic Proton acceptor. A Radical SAM core domain is found at 103–341 (DGDRATLCVS…VTVRTTRGDD (239 aa)). Cysteines 110 and 346 form a disulfide. 3 residues coordinate [4Fe-4S] cluster: Cys117, Cys121, and Cys124. Residues 171–172 (GE), Ser203, 225–227 (SLH), and Asn303 each bind S-adenosyl-L-methionine. Cys346 (S-methylcysteine intermediate) is an active-site residue.

This sequence belongs to the radical SAM superfamily. RlmN family. Requires [4Fe-4S] cluster as cofactor.

It localises to the cytoplasm. The enzyme catalyses adenosine(2503) in 23S rRNA + 2 reduced [2Fe-2S]-[ferredoxin] + 2 S-adenosyl-L-methionine = 2-methyladenosine(2503) in 23S rRNA + 5'-deoxyadenosine + L-methionine + 2 oxidized [2Fe-2S]-[ferredoxin] + S-adenosyl-L-homocysteine. It catalyses the reaction adenosine(37) in tRNA + 2 reduced [2Fe-2S]-[ferredoxin] + 2 S-adenosyl-L-methionine = 2-methyladenosine(37) in tRNA + 5'-deoxyadenosine + L-methionine + 2 oxidized [2Fe-2S]-[ferredoxin] + S-adenosyl-L-homocysteine. Its function is as follows. Specifically methylates position 2 of adenine 2503 in 23S rRNA and position 2 of adenine 37 in tRNAs. m2A2503 modification seems to play a crucial role in the proofreading step occurring at the peptidyl transferase center and thus would serve to optimize ribosomal fidelity. In Marinomonas sp. (strain MWYL1), this protein is Dual-specificity RNA methyltransferase RlmN.